Reading from the N-terminus, the 486-residue chain is Maternal protein exuperantia (486 aa).

2 disordered regions span residues 202 to 233 and 386 to 477; these read NARVDNDNEADSNSSSADKHVKNGLQKERDEF and STIR…ISLP. Positions 218-233 are enriched in basic and acidic residues; the sequence is ADKHVKNGLQKERDEF. Residues 387 to 397 show a composition bias toward basic residues; the sequence is TIRRRNKRNTP. Polar residues-rich tracts occupy residues 420–437 and 464–476; these read KSQSVSSVPDSTTKTPSP and SALNNTAPASISL.

Its function is as follows. Ensures the proper localization of the mRNA of the bicoid gene to the anterior regions of the oocyte thus playing a fundamental role in the establishment of the polarity of the oocyte. May bind the bcd mRNA. The polypeptide is Maternal protein exuperantia (exu) (Drosophila virilis (Fruit fly)).